Here is a 364-residue protein sequence, read N- to C-terminus: Eukaryotic translation initiation factor 3 subunit H (364 aa).

An MPN domain is found at 13–162; it reads VQVDALVAIK…LRAYRLSPSF (150 aa).

It belongs to the eIF-3 subunit H family. Component of the eukaryotic translation initiation factor 3 (eIF-3) complex.

Its subcellular location is the cytoplasm. Functionally, component of the eukaryotic translation initiation factor 3 (eIF-3) complex, which is involved in protein synthesis of a specialized repertoire of mRNAs and, together with other initiation factors, stimulates binding of mRNA and methionyl-tRNAi to the 40S ribosome. The eIF-3 complex specifically targets and initiates translation of a subset of mRNAs involved in cell proliferation. The polypeptide is Eukaryotic translation initiation factor 3 subunit H (Phaeosphaeria nodorum (strain SN15 / ATCC MYA-4574 / FGSC 10173) (Glume blotch fungus)).